We begin with the raw amino-acid sequence, 92 residues long: YcgL domain-containing protein Sbal_1869 (92 aa).

Residues 1 to 85 (MLCAVYKSSR…PQVNLLAEHK (85 aa)) form the YcgL domain.

In Shewanella baltica (strain OS155 / ATCC BAA-1091), this protein is YcgL domain-containing protein Sbal_1869.